The sequence spans 61 residues: Small ribosomal subunit protein uS14 (61 aa).

Residues Cys24, Cys27, Cys40, and Cys43 each coordinate Zn(2+).

It belongs to the universal ribosomal protein uS14 family. Zinc-binding uS14 subfamily. Part of the 30S ribosomal subunit. Contacts proteins S3 and S10. Zn(2+) is required as a cofactor.

Its function is as follows. Binds 16S rRNA, required for the assembly of 30S particles and may also be responsible for determining the conformation of the 16S rRNA at the A site. The protein is Small ribosomal subunit protein uS14 of Staphylococcus aureus (strain USA300 / TCH1516).